Consider the following 276-residue polypeptide: Diaminopimelate epimerase (276 aa).

The substrate site is built by asparagine 13, glutamine 46, and asparagine 66. The Proton donor role is filled by cysteine 75. Residues 76–77 (GN), asparagine 159, asparagine 192, and 210–211 (ER) contribute to the substrate site. Cysteine 219 (proton acceptor) is an active-site residue. A substrate-binding site is contributed by 220–221 (GT).

Belongs to the diaminopimelate epimerase family. In terms of assembly, homodimer.

It localises to the cytoplasm. It catalyses the reaction (2S,6S)-2,6-diaminopimelate = meso-2,6-diaminopimelate. It participates in amino-acid biosynthesis; L-lysine biosynthesis via DAP pathway; DL-2,6-diaminopimelate from LL-2,6-diaminopimelate: step 1/1. Its function is as follows. Catalyzes the stereoinversion of LL-2,6-diaminopimelate (L,L-DAP) to meso-diaminopimelate (meso-DAP), a precursor of L-lysine and an essential component of the bacterial peptidoglycan. In Pseudomonas fluorescens, this protein is Diaminopimelate epimerase.